Consider the following 408-residue polypeptide: Phosphopentomutase (408 aa).

Mn(2+) contacts are provided by D10, D303, H308, D344, H345, and H356.

Belongs to the phosphopentomutase family. Mn(2+) serves as cofactor.

It is found in the cytoplasm. The enzyme catalyses 2-deoxy-alpha-D-ribose 1-phosphate = 2-deoxy-D-ribose 5-phosphate. It carries out the reaction alpha-D-ribose 1-phosphate = D-ribose 5-phosphate. It participates in carbohydrate degradation; 2-deoxy-D-ribose 1-phosphate degradation; D-glyceraldehyde 3-phosphate and acetaldehyde from 2-deoxy-alpha-D-ribose 1-phosphate: step 1/2. Isomerase that catalyzes the conversion of deoxy-ribose 1-phosphate (dRib-1-P) and ribose 1-phosphate (Rib-1-P) to deoxy-ribose 5-phosphate (dRib-5-P) and ribose 5-phosphate (Rib-5-P), respectively. In Tolumonas auensis (strain DSM 9187 / NBRC 110442 / TA 4), this protein is Phosphopentomutase.